Here is a 698-residue protein sequence, read N- to C-terminus: MTSLQQQQQQQRVKYGPPHHIKRRPYHPILESLEFQTNQHLIQEYSLDIVNTLSQLESLTLVNPAMIDLQPEIQWFMRPFLLDFLIELHSSFKLQPTTLFLCLNIIDRYCAKRIVFKRHYQLVGCTALWIASKYEDKKSRVPTLKELTIMCRNAYDEEMFVQMEMHILSTLDWSIGHPTLEDCLQLAIDSNNLSNNTTNDIENKSVRPNRKSSISSAVTAVARFLCELSLYDKYFLSVPPSLIAITANLLSCSMLQIPHASITLKNLIEQEIINPQQKKQKKAFSSNSSRTTTASYTHQNQSDVRHSSFDEDIDLDSGDEGDDDEDYIDEFYETNNYDDTNATTFDESINKSTTINDENQPPQIHTPFLSGLDEDSILSIKKICLMLIIQLSKVTEVLSKKYENLGVIQVINNFHSNYKFIIQSIYENQELLLNTINDSTNNNEIDYKLIQSSEILLQFPKFDEYLTEDEDENVSTDDEANSQPQGYDGSGSDGNNQLFTPKSPNAFSSNSSLTLNNHPQSMVPVTPPSATSQYSLFSNKNNRTHESTSGLNSTCNTPTHISISSFAPPQPPPGSILKPKLTSINSTNSLKIKKLTSNSNSSNINIHHGHHNTKQEKRYSHISIGSNSSSKYDGFSPIKSISTNGSLITNNGSFTNIVNNTNSSSPLMNQQQQYYHQQQHQQQVTQSSLYQHHHQYHQ.

Low complexity predominate over residues 1–11 (MTSLQQQQQQQ). Disordered regions lie at residues 1-21 (MTSL…PHHI), 277-326 (QKKQ…DDED), 469-577 (DEDE…GSIL), 599-619 (SNSS…EKRY), and 659-698 (NNTN…QYHQ). Polar residues predominate over residues 277–302 (QKKQKKAFSSNSSRTTTASYTHQNQS). 2 stretches are compositionally biased toward acidic residues: residues 310–326 (DEDI…DDED) and 469–480 (DEDENVSTDDEA). 2 stretches are compositionally biased toward polar residues: residues 493–520 (DGNN…NHPQ) and 528–567 (PSAT…SSFA). Positions 659–669 (NNTNSSSPLMN) are enriched in polar residues. A compositionally biased stretch (low complexity) spans 670-690 (QQQQYYHQQQHQQQVTQSSLY).

It belongs to the cyclin family.

Its function is as follows. Essential for the control of the cell cycle at the G1/S (start) transition. Interacts with the CDC2 protein kinase to form MPF. The polypeptide is G1/S-specific cyclin CCN1 (CCN1) (Candida albicans (strain WO-1) (Yeast)).